The primary structure comprises 272 residues: F-actin-capping protein subunit beta (272 aa).

This sequence belongs to the F-actin-capping protein beta subunit family. Component of the F-actin capping complex, composed of a heterodimer of an alpha and a beta subunit.

Its subcellular location is the cytoplasm. It localises to the cytoskeleton. Its function is as follows. F-actin-capping proteins bind in a Ca(2+)-independent manner to the fast growing ends of actin filaments (barbed end) thereby blocking the exchange of subunits at these ends. Unlike other capping proteins (such as gelsolin and severin), these proteins do not sever actin filaments. This Dictyostelium discoideum (Social amoeba) protein is F-actin-capping protein subunit beta (acpA).